Here is a 112-residue protein sequence, read N- to C-terminus: DNA-binding protein TGAM_1196 (112 aa).

Belongs to the PDCD5 family.

This Thermococcus gammatolerans (strain DSM 15229 / JCM 11827 / EJ3) protein is DNA-binding protein TGAM_1196.